A 154-amino-acid chain; its full sequence is Transcriptional repressor NrdR (154 aa).

A zinc finger lies at 3–34 (CPFCGANDTKVIDSRLVAEGEQVRRRRECVAC). The 91-residue stretch at 49-139 (PRLIKQDGTR…VYRRFQDLDE (91 aa)) folds into the ATP-cone domain.

It belongs to the NrdR family. Zn(2+) serves as cofactor.

Its function is as follows. Negatively regulates transcription of bacterial ribonucleotide reductase nrd genes and operons by binding to NrdR-boxes. This Pseudomonas putida (strain GB-1) protein is Transcriptional repressor NrdR.